A 96-amino-acid chain; its full sequence is (4S)-4-hydroxy-5-phosphonooxypentane-2,3-dione isomerase (96 aa).

The 90-residue stretch at 2 to 91 (HVTLVEINVH…MTGPRKKRLF (90 aa)) folds into the ABM domain.

It belongs to the LsrG family. In terms of assembly, homodimer.

The protein localises to the cytoplasm. It carries out the reaction (2S)-2-hydroxy-3,4-dioxopentyl phosphate = 3-hydroxy-2,4-dioxopentyl phosphate. Involved in the degradation of phospho-AI-2, thereby terminating induction of the lsr operon and closing the AI-2 signaling cycle. Catalyzes the conversion of (4S)-4-hydroxy-5-phosphonooxypentane-2,3-dione (P-DPD) to 3-hydroxy-5-phosphonooxypentane-2,4-dione (P-HPD). The protein is (4S)-4-hydroxy-5-phosphonooxypentane-2,3-dione isomerase of Escherichia coli O9:H4 (strain HS).